The chain runs to 427 residues: Transcription factor MYB98 (427 aa).

Positions 195-202 (TRKLSSSS) match the Nuclear localization signal 1 motif. HTH myb-type domains are found at residues 212–267 (KSTL…RPDI) and 268–318 (KKET…RRQF). 2 consecutive DNA-binding regions (H-T-H motif) follow at residues 240–263 (WSHI…HNHL) and 291–314 (WAEI…NATK). Positions 361–368 (NKKKDVVV) match the Nuclear localization signal 2 motif.

As to expression, expressed at high levels in the synergid cells of the female gametophyte, and at lower levels in the endosperm of young seeds and the trichomes of young leaves and sepals.

It is found in the nucleus. In terms of biological role, transcription factor that binds to the motif 5'-GTAACNT-3' in the promoter of target genes (e.g. DD11 and DD18) and promotes their expression within synergid cells (e.g. in the filiform apparatus) in ovules. Required for the formation of the filiform apparatus during synergid cell differentiation in the female gametophyte. Involved in pollen tube guidance to the micropyle. The polypeptide is Transcription factor MYB98 (Arabidopsis thaliana (Mouse-ear cress)).